A 235-amino-acid polypeptide reads, in one-letter code: Small ribosomal subunit protein uS3 (235 aa).

Positions 39-107 (IRTYIENELK…ETHLNIVEVR (69 aa)) constitute a KH type-2 domain. Residues 215–235 (SERRAVEGAGDGGGQRRRENA) form a disordered region.

The protein belongs to the universal ribosomal protein uS3 family. Part of the 30S ribosomal subunit. Forms a tight complex with proteins S10 and S14.

Functionally, binds the lower part of the 30S subunit head. Binds mRNA in the 70S ribosome, positioning it for translation. This is Small ribosomal subunit protein uS3 from Chelativorans sp. (strain BNC1).